The chain runs to 211 residues: Glutathione S-transferase (211 aa).

One can recognise a GST N-terminal domain in the interval 3-87 (DNIVLYYFDA…YLSKKYNICG (85 aa)). Residues 58-59 (QV), 71-72 (QS), D105, K117, and T121 contribute to the glutathione site. In terms of domain architecture, GST C-terminal spans 89 to 211 (SELNEFYADM…YITNRKESVY (123 aa)).

This sequence belongs to the GST superfamily. As to quaternary structure, homodimer. In the absence of ligands two homodimers may interact to form a tetramer.

The catalysed reaction is RX + glutathione = an S-substituted glutathione + a halide anion + H(+). Inhibited by chloroquine, cibacron blue, ferriprotoporphyrin IX (hemin) and S-hexylglutathione. Functionally, conjugation of reduced glutathione to a wide number of exogenous and endogenous hydrophobic electrophiles. May also function as a storage protein or ligandin for parasitotoxic ferriprotoporphyrin IX (hemin). The polypeptide is Glutathione S-transferase (Plasmodium falciparum (isolate 3D7)).